The sequence spans 355 residues: Heat-inducible transcription repressor HrcA (355 aa).

This sequence belongs to the HrcA family.

Functionally, negative regulator of class I heat shock genes (grpE-dnaK-dnaJ and groELS operons). Prevents heat-shock induction of these operons. In Nitratidesulfovibrio vulgaris (strain DSM 19637 / Miyazaki F) (Desulfovibrio vulgaris), this protein is Heat-inducible transcription repressor HrcA.